The chain runs to 352 residues: Photosystem II D2 protein (352 aa).

The residue at position 2 (threonine 2) is an N-acetylthreonine. Threonine 2 bears the Phosphothreonine mark. The helical transmembrane segment at 40-60 (CAYFALGGWLTGTTFVTSWYT) threads the bilayer. Histidine 117 serves as a coordination point for chlorophyll a. The helical transmembrane segment at 124-140 (GFMLRQFEIARAVKIRP) threads the bilayer. The pheophytin a site is built by glutamine 129 and asparagine 142. Residues 152–165 (VFVSVFLIYPLGQA) form a helical membrane-spanning segment. Residue histidine 197 coordinates chlorophyll a. A helical transmembrane segment spans residues 207 to 227 (AALLCAIHGATVENTLFEDGD). Histidine 214 and phenylalanine 261 together coordinate a plastoquinone. Residue histidine 214 coordinates Fe cation. Histidine 268 is a binding site for Fe cation. Residues 278–294 (GLWMSALGVVGLALNLR) traverse the membrane as a helical segment.

It belongs to the reaction center PufL/M/PsbA/D family. In terms of assembly, PSII is composed of 1 copy each of membrane proteins PsbA, PsbB, PsbC, PsbD, PsbE, PsbF, PsbH, PsbI, PsbJ, PsbK, PsbL, PsbM, PsbT, PsbX, PsbY, PsbZ, Psb30/Ycf12, at least 3 peripheral proteins of the oxygen-evolving complex and a large number of cofactors. It forms dimeric complexes. The cofactor is The D1/D2 heterodimer binds P680, chlorophylls that are the primary electron donor of PSII, and subsequent electron acceptors. It shares a non-heme iron and each subunit binds pheophytin, quinone, additional chlorophylls, carotenoids and lipids. There is also a Cl(-1) ion associated with D1 and D2, which is required for oxygen evolution. The PSII complex binds additional chlorophylls, carotenoids and specific lipids..

Its subcellular location is the plastid. It is found in the chloroplast thylakoid membrane. The catalysed reaction is 2 a plastoquinone + 4 hnu + 2 H2O = 2 a plastoquinol + O2. Photosystem II (PSII) is a light-driven water:plastoquinone oxidoreductase that uses light energy to abstract electrons from H(2)O, generating O(2) and a proton gradient subsequently used for ATP formation. It consists of a core antenna complex that captures photons, and an electron transfer chain that converts photonic excitation into a charge separation. The D1/D2 (PsbA/PsbD) reaction center heterodimer binds P680, the primary electron donor of PSII as well as several subsequent electron acceptors. D2 is needed for assembly of a stable PSII complex. In Tupiella akineta (Green alga), this protein is Photosystem II D2 protein.